Consider the following 311-residue polypeptide: Aspartate carbamoyltransferase catalytic subunit (311 aa).

The carbamoyl phosphate site is built by Arg-55 and Thr-56. Residue Lys-85 coordinates L-aspartate. Carbamoyl phosphate is bound by residues Arg-106, His-135, and Gln-138. L-aspartate contacts are provided by Arg-168 and Arg-230. The carbamoyl phosphate site is built by Leu-268 and Pro-269.

This sequence belongs to the aspartate/ornithine carbamoyltransferase superfamily. ATCase family. As to quaternary structure, heterododecamer (2C3:3R2) of six catalytic PyrB chains organized as two trimers (C3), and six regulatory PyrI chains organized as three dimers (R2).

It catalyses the reaction carbamoyl phosphate + L-aspartate = N-carbamoyl-L-aspartate + phosphate + H(+). It participates in pyrimidine metabolism; UMP biosynthesis via de novo pathway; (S)-dihydroorotate from bicarbonate: step 2/3. Catalyzes the condensation of carbamoyl phosphate and aspartate to form carbamoyl aspartate and inorganic phosphate, the committed step in the de novo pyrimidine nucleotide biosynthesis pathway. In Citrobacter koseri (strain ATCC BAA-895 / CDC 4225-83 / SGSC4696), this protein is Aspartate carbamoyltransferase catalytic subunit.